Here is a 128-residue protein sequence, read N- to C-terminus: Holo-[acyl-carrier-protein] synthase (128 aa).

Residues D9 and E56 each coordinate Mg(2+).

It belongs to the P-Pant transferase superfamily. AcpS family. Mg(2+) serves as cofactor.

It localises to the cytoplasm. It catalyses the reaction apo-[ACP] + CoA = holo-[ACP] + adenosine 3',5'-bisphosphate + H(+). Its function is as follows. Transfers the 4'-phosphopantetheine moiety from coenzyme A to a Ser of acyl-carrier-protein. This Pelagibacter ubique (strain HTCC1062) protein is Holo-[acyl-carrier-protein] synthase.